The following is a 345-amino-acid chain: Galacturonate transporter (345 aa).

The first 32 residues, 1–32 (MFKIKGLRWYMIGLVTIGTVLGYLTRNAIAAA), serve as a signal peptide directing secretion. A run of 8 helical transmembrane segments spans residues 49–69 (YIIA…GYVL), 76–96 (VGYA…ALAN), 100–120 (GLAV…PAGL), 139–159 (FNVG…WAIM), 165–185 (MAFL…LYFY), 237–257 (FLAE…MFKA), 265–285 (IAMF…LGGY), and 304–324 (LVVT…LFTS).

Belongs to the major facilitator superfamily. Phthalate permease family.

It localises to the cell inner membrane. The catalysed reaction is aldehydo-D-galacturonate(out) + H(+)(out) = aldehydo-D-galacturonate(in) + H(+)(in). Its activity is regulated as follows. Inhibited by cyanide and 2,4-dinitrophenol, but not by arsenate. Its function is as follows. Transport of D-galacturonate. Cannot transport the dimer digalacturonic acid. Uptake is an active process. This chain is Galacturonate transporter, found in Dickeya chrysanthemi (Pectobacterium chrysanthemi).